A 1439-amino-acid polypeptide reads, in one-letter code: DNA-directed RNA polymerase subunit beta' (1439 aa).

Zn(2+) contacts are provided by C70, C72, C85, and C88. Residues D504, D506, and D508 each coordinate Mg(2+). C862, C936, C943, and C946 together coordinate Zn(2+).

Belongs to the RNA polymerase beta' chain family. In terms of assembly, the RNAP catalytic core consists of 2 alpha, 1 beta, 1 beta' and 1 omega subunit. When a sigma factor is associated with the core the holoenzyme is formed, which can initiate transcription. Mg(2+) is required as a cofactor. The cofactor is Zn(2+).

The enzyme catalyses RNA(n) + a ribonucleoside 5'-triphosphate = RNA(n+1) + diphosphate. DNA-dependent RNA polymerase catalyzes the transcription of DNA into RNA using the four ribonucleoside triphosphates as substrates. This is DNA-directed RNA polymerase subunit beta' from Gluconobacter oxydans (strain 621H) (Gluconobacter suboxydans).